Reading from the N-terminus, the 425-residue chain is Phosphomethylpyrimidine synthase (425 aa).

Residues Met94, Tyr123, His162, Ser184 to Gly186, Asn225 to Arg228, and Glu264 each bind substrate. Position 268 (His268) interacts with Zn(2+). Tyr291 contacts substrate. His332 serves as a coordination point for Zn(2+). Positions 407, 410, and 414 each coordinate [4Fe-4S] cluster.

The protein belongs to the ThiC family. [4Fe-4S] cluster serves as cofactor.

The catalysed reaction is 5-amino-1-(5-phospho-beta-D-ribosyl)imidazole + S-adenosyl-L-methionine = 4-amino-2-methyl-5-(phosphooxymethyl)pyrimidine + CO + 5'-deoxyadenosine + formate + L-methionine + 3 H(+). Its pathway is cofactor biosynthesis; thiamine diphosphate biosynthesis. Its function is as follows. Catalyzes the synthesis of the hydroxymethylpyrimidine phosphate (HMP-P) moiety of thiamine from aminoimidazole ribotide (AIR) in a radical S-adenosyl-L-methionine (SAM)-dependent reaction. The protein is Phosphomethylpyrimidine synthase of Methanocorpusculum labreanum (strain ATCC 43576 / DSM 4855 / Z).